The sequence spans 752 residues: Myotubularin-related protein 10 (752 aa).

In terms of domain architecture, Myotubularin phosphatase spans 206-636 (FDCSSDWDRE…SHLSVWKLYF (431 aa)). A coiled-coil region spans residues 652-683 (TAFHKLSVLTDEIEMLQNQLRQYKGAAGTANT).

This sequence belongs to the protein-tyrosine phosphatase family. Non-receptor class myotubularin subfamily.

The polypeptide is Myotubularin-related protein 10 (mtmr10) (Danio rerio (Zebrafish)).